The primary structure comprises 549 residues: MKNINPTQTSAWQALQKHYDEMKDVTIAELFANDSDRFAKFSATFDDLMLVDFSKNRITEETLAKLQDLAKETDLAGAIKSMFSGEKINRTEDRAVLHVALRNRSNTPIIVDGKDVMPEVNAVLEKMKTFSQAIISGQWKGYTGKAITDVVNIGIGGSDLGPFMVTEVLRPYKNHLTMHFVSNVDGTHIAEVLKKVNPETTLFLVASKTFTTQETMTNAHSARDWFLKTAGDEKHVAKHFAALSTNAKAVGEFGIDTANMFEFWDWVGGRYSLWSAIGLSIILSVGFDNFVELLSGAHAMDKHFSTTPAEKNLPILLALIGIWYNNFFGAETEAILPYDQYMHRFAAYFQQGNMESNGKYVDRNGNAVDYQTGPIIWGEPGTNGQHAFYQLIHQGTKMVPCDFIAPAITHNPLSDHHQKLLSNFFAQTEALAFGKSREVVEQEYRDQGKDPAQLEHVVPFKVFEGNRPTNSILLREITPFSLGALIALYEHKIFTQGVILNIFTFDQWGVELGKQLANRILPELGDDKAISSHDSSTNGLINRYKAWRA.

The active-site Proton donor is Glu-355. Active-site residues include His-386 and Lys-514.

This sequence belongs to the GPI family.

The protein resides in the cytoplasm. The catalysed reaction is alpha-D-glucose 6-phosphate = beta-D-fructose 6-phosphate. It functions in the pathway carbohydrate biosynthesis; gluconeogenesis. It participates in carbohydrate degradation; glycolysis; D-glyceraldehyde 3-phosphate and glycerone phosphate from D-glucose: step 2/4. Its function is as follows. Catalyzes the reversible isomerization of glucose-6-phosphate to fructose-6-phosphate. The polypeptide is Glucose-6-phosphate isomerase (Salmonella paratyphi A (strain AKU_12601)).